Here is a 254-residue protein sequence, read N- to C-terminus: Probable WRKY transcription factor 67 (254 aa).

A DNA-binding region (WRKY) is located at residues 102–170 (SRTMCPNDGF…YLGKHVCKAF (69 aa)).

It belongs to the WRKY group III family.

The protein localises to the nucleus. Functionally, transcription factor. Interacts specifically with the W box (5'-(T)TGAC[CT]-3'), a frequently occurring elicitor-responsive cis-acting element. This chain is Probable WRKY transcription factor 67 (WRKY67), found in Arabidopsis thaliana (Mouse-ear cress).